Here is a 562-residue protein sequence, read N- to C-terminus: Carboxylesterase 1E (562 aa).

The first 19 residues, 1-19 (MCLSALILVSLAAFTAGAG), serve as a signal peptide directing secretion. N-linked (GlcNAc...) asparagine glycosylation occurs at asparagine 80. A disulfide bridge connects residues cysteine 88 and cysteine 117. Catalysis depends on serine 222, which acts as the Acyl-ester intermediate. The cysteines at positions 274 and 285 are disulfide-linked. An N-linked (GlcNAc...) asparagine glycan is attached at asparagine 276. Residues glutamate 354 and histidine 467 each act as charge relay system in the active site. N-linked (GlcNAc...) asparagine glycosylation occurs at asparagine 490. Residues 559-562 (HTEL) carry the Prevents secretion from ER motif.

Belongs to the type-B carboxylesterase/lipase family.

It localises to the endoplasmic reticulum lumen. Its subcellular location is the microsome membrane. It carries out the reaction a carboxylic ester + H2O = an alcohol + a carboxylate + H(+). The enzyme catalyses all-trans-retinyl hexadecanoate + H2O = all-trans-retinol + hexadecanoate + H(+). In terms of biological role, involved in the detoxification of xenobiotics and in the activation of ester and amide prodrugs. Hydrolyzes retinyl esters. This chain is Carboxylesterase 1E, found in Mus musculus (Mouse).